The primary structure comprises 225 residues: Thymidylate kinase (225 aa).

ATP is bound at residue 9–16; that stretch reads GIEGCGKT.

Belongs to the thymidylate kinase family.

It catalyses the reaction dTMP + ATP = dTDP + ADP. Its function is as follows. Phosphorylation of dTMP to form dTDP in both de novo and salvage pathways of dTTP synthesis. The polypeptide is Thymidylate kinase (Geobacter sp. (strain M21)).